The primary structure comprises 343 residues: Low conductance mechanosensitive channel YnaI (343 aa).

Topologically, residues 1–9 (MIAELFTNN) are periplasmic. Residues 10 to 30 (ALNLVIIFGSCAALILMSFWF) traverse the membrane as a helical segment. The Cytoplasmic segment spans residues 31 to 40 (RRGNRKRKGF). A helical transmembrane segment spans residues 41–61 (LFHAVQFLIYTIIISAVGSII). Residues 62–77 (NYVIENYKLKFITPGV) are Periplasmic-facing. The chain crosses the membrane as a helical span at residues 78-98 (IDFICTSLIAVILTIKLFLLI). The Cytoplasmic segment spans residues 99–125 (NQFEKQQIKKGRDITSARIMSRIIKIT). A helical membrane pass occupies residues 126–146 (IIVVLVLLYGEHFGMSLSGLL). Residue threonine 147 is a topological domain, periplasmic. Residues 148-168 (FGGIGGLAVGMAGKDILSNFF) traverse the membrane as a helical segment. Residues 169–343 (SGIMLYFDRP…DNITPPEQGR (175 aa)) lie on the Cytoplasmic side of the membrane.

It belongs to the MscS (TC 1.A.23) family. As to quaternary structure, homoheptamer.

It is found in the cell inner membrane. Mechanosensitive channel that protects cells against hypoosmotic stress when highly overexpressed. The protein is Low conductance mechanosensitive channel YnaI (ynaI) of Escherichia coli (strain K12).